Consider the following 438-residue polypeptide: Glutaryl-CoA dehydrogenase, mitochondrial (438 aa).

The transit peptide at 1–44 directs the protein to the mitochondrion; sequence MALRGVYAQLLNRGPGLRVFRSWSSATAQTEKGEKTQSRSAKPS. Residues 138-139 and S186 contribute to the substrate site; that span reads RS. FAD-binding positions include 177–186, S186, and 212–214; these read FGLTEPNHGS and WIT. K240 is modified (N6-acetyllysine). Position 287-294 (287-294) interacts with substrate; it reads FGCLNNAR. FAD is bound by residues R319, Q330, and 387–391; that span reads DMLGG. The active-site Proton acceptor is E414. G415 contributes to the substrate binding site. FAD is bound by residues T416, 416 to 418, and F434; that span reads THD.

Belongs to the acyl-CoA dehydrogenase family. As to quaternary structure, homotetramer. It depends on FAD as a cofactor.

It is found in the mitochondrion matrix. It carries out the reaction glutaryl-CoA + oxidized [electron-transfer flavoprotein] + 2 H(+) = (2E)-butenoyl-CoA + reduced [electron-transfer flavoprotein] + CO2. The protein operates within amino-acid metabolism; lysine degradation. Its pathway is amino-acid metabolism; tryptophan metabolism. Catalyzes the oxidative decarboxylation of glutaryl-CoA to crotonyl-CoA and CO(2) in the degradative pathway of L-lysine, L-hydroxylysine, and L-tryptophan metabolism. It uses electron transfer flavoprotein as its electron acceptor. This chain is Glutaryl-CoA dehydrogenase, mitochondrial (GCDH), found in Bos taurus (Bovine).